Here is a 1018-residue protein sequence, read N- to C-terminus: Ubiquitin carboxyl-terminal hydrolase 35 (1018 aa).

Residues 441-926 form the USP domain; that stretch reads IGLINLGNTC…TAYVLFYRQR (486 aa). Cysteine 450 (nucleophile) is an active-site residue. Disordered regions lie at residues 544 to 566 and 610 to 757; these read QKLKQSSSPSPPEEPPAPSSTSV and RLGS…GSEG. The segment covering 552-561 has biased composition (pro residues); sequence PSPPEEPPAP. Serine 613 carries the post-translational modification Phosphoserine. Composition is skewed to basic and acidic residues over residues 673–691, 699–709, and 718–728; these read QEERIEREEEGKEERTEKE, STRGEGEREKE, and KVEKETEKEAE. Histidine 862 serves as the catalytic Proton acceptor. The tract at residues 984 to 1011 is disordered; the sequence is HWGRGFDEDKDEDEGSPGGCNPAGGNGG. Gly residues predominate over residues 999–1011; it reads SPGGCNPAGGNGG.

The protein belongs to the peptidase C19 family. In terms of assembly, homodimer (via C-terminal region). Interacts with HSP90AA1. Post-translationally, ubiquitinated by CHIP/STUB1 in an HSP90-dependent manner; leading to proteasomal degradation. This ubiquitination can be reversed through auto-deubiquitinating activity. Expressed in testis, pancreas and skeletal muscle.

Its subcellular location is the cytoplasm. The protein resides in the mitochondrion. The enzyme catalyses Thiol-dependent hydrolysis of ester, thioester, amide, peptide and isopeptide bonds formed by the C-terminal Gly of ubiquitin (a 76-residue protein attached to proteins as an intracellular targeting signal).. Its function is as follows. Deubiquitinase that plays a role in different processes including cell cycle regulation, mitophagy or endoplasmic reticulum stress. Inhibits TNFalpha-induced NF-kappa-B activation through stabilizing TNIP2 protein via deubiquitination. Plays an essential role during mitosis by deubiquitinating and thereby regulating the levels of Aurora B/AURKB protein. In addition, regulates the protein levels of other key component of the chromosomal passenger complex (CPC) such as survivin/BIRC5 or Borealin/CDCA8 by enhancing their stability. Regulates the degradation of mitochondria through the process of autophagy termed mitophagy. In Homo sapiens (Human), this protein is Ubiquitin carboxyl-terminal hydrolase 35 (USP35).